The following is a 46-amino-acid chain: Iota-conotoxin-like M11.1 (46 aa).

Disulfide bonds link Cys5/Cys19, Cys12/Cys22, Cys18/Cys27, and Cys21/Cys38. Position 44 is a D-methionine (Met44). Arg46 is a propeptide (removed by a carboxypeptidase).

This sequence belongs to the conotoxin I1 superfamily. As to expression, expressed by the venom duct.

The protein resides in the secreted. Its function is as follows. Iota-conotoxins bind to voltage-gated sodium channels (Nav) and act as agonists by shifting the voltage-dependence of activation to more hyperpolarized levels. Produces general excitatory symptoms. The polypeptide is Iota-conotoxin-like M11.1 (Conus magus (Magical cone)).